The chain runs to 175 residues: Disulfide bond formation protein B (175 aa).

The Cytoplasmic segment spans residues 1-13 (MTAFTRFAHSRAS). A helical membrane pass occupies residues 14–30 (WLILTGSAIALEAAALY). At 31–48 (FQYVMKLDPCVMCIYQRL) the chain is on the periplasmic side. Cys40 and Cys43 are disulfide-bonded. The chain crosses the membrane as a helical span at residues 49–64 (AVFGILAAGLIGMTAP). The Cytoplasmic segment spans residues 65–71 (KYRIVRI). A helical transmembrane segment spans residues 72 to 89 (LGALGWAVSATWGLKLAL). The Periplasmic portion of the chain corresponds to 90 to 144 (ALVDMQNNPSPFSTCSFLPEFPAWMPLHEWFPSVMLPTGMCTDVPWQFMGVTMAE). Cys104 and Cys130 are joined by a disulfide. A helical transmembrane segment spans residues 145 to 163 (WMVVAFSGYLVALLLFIVP). Residues 164-175 (ILSGSNKPSLYK) are Cytoplasmic-facing.

It belongs to the DsbB family.

It localises to the cell inner membrane. Functionally, required for disulfide bond formation in some periplasmic proteins. Acts by oxidizing the DsbA protein. The sequence is that of Disulfide bond formation protein B from Shewanella sp. (strain MR-4).